The primary structure comprises 414 residues: Diaminopimelate decarboxylase (414 aa).

Position 52 is an N6-(pyridoxal phosphate)lysine (Lys52). Pyridoxal 5'-phosphate is bound by residues Gly231 and Glu265 to Arg268. The substrate site is built by Arg268, Arg304, and Tyr308. The active-site Proton donor is Cys334. The substrate site is built by Glu335 and Tyr362. Residue Tyr362 participates in pyridoxal 5'-phosphate binding.

It belongs to the Orn/Lys/Arg decarboxylase class-II family. LysA subfamily. In terms of assembly, homodimer. Pyridoxal 5'-phosphate serves as cofactor.

It carries out the reaction meso-2,6-diaminopimelate + H(+) = L-lysine + CO2. Its pathway is amino-acid biosynthesis; L-lysine biosynthesis via DAP pathway; L-lysine from DL-2,6-diaminopimelate: step 1/1. Specifically catalyzes the decarboxylation of meso-diaminopimelate (meso-DAP) to L-lysine. The polypeptide is Diaminopimelate decarboxylase (Neisseria meningitidis serogroup B (strain ATCC BAA-335 / MC58)).